A 411-amino-acid polypeptide reads, in one-letter code: MLDLKNLQNNFDEVAKKLKNKKVDENILKKLAELFASLKKEKIALEEFQAFQNKFSKELATAEDKESLKAKLSENKSKINEQSAKVNALENELEEIAHAIPNIPDECVPVGEDENENVELKKVLNPPSFDFTPKEHFELGESLNWLDFMRGVKISQSRFCVLKNEGALLSRALVNYMIDFNRSRGFEFVNVPFLVNGATMFGTGQLPKFKEDMYKVDDEDLYLISTSEIPVTNLYSGEILASETLPIKMTCYSACFRKEAGSAGRDTRGIIRQHQFEKVELVSITKPEQSDSVFNEMLECASDLLSSLGLAHRHLMLCTGDLGFSAAKTVDLEVWLPGQNKYREISSVSNCRDFQARRAKIRYKNEQGKNELVHTLNGSSLAVGRTLVAIMENYQDKEGKIHIPDVLKKYF.

226–228 (TSE) lines the L-serine pocket. 257–259 (RKE) is a binding site for ATP. An L-serine-binding site is contributed by glutamate 280. 344-347 (EISS) provides a ligand contact to ATP. Serine 379 is an L-serine binding site.

The protein belongs to the class-II aminoacyl-tRNA synthetase family. Type-1 seryl-tRNA synthetase subfamily. As to quaternary structure, homodimer. The tRNA molecule binds across the dimer.

It localises to the cytoplasm. The enzyme catalyses tRNA(Ser) + L-serine + ATP = L-seryl-tRNA(Ser) + AMP + diphosphate + H(+). The catalysed reaction is tRNA(Sec) + L-serine + ATP = L-seryl-tRNA(Sec) + AMP + diphosphate + H(+). It participates in aminoacyl-tRNA biosynthesis; selenocysteinyl-tRNA(Sec) biosynthesis; L-seryl-tRNA(Sec) from L-serine and tRNA(Sec): step 1/1. Functionally, catalyzes the attachment of serine to tRNA(Ser). Is also able to aminoacylate tRNA(Sec) with serine, to form the misacylated tRNA L-seryl-tRNA(Sec), which will be further converted into selenocysteinyl-tRNA(Sec). The protein is Serine--tRNA ligase of Campylobacter jejuni subsp. jejuni serotype O:2 (strain ATCC 700819 / NCTC 11168).